The primary structure comprises 459 residues: Cysteine--tRNA ligase (459 aa).

Zn(2+) is bound at residue Cys31. A 'HIGH' region motif is present at residues 33 to 43 (PTVYYNPHIGN). Positions 216, 241, and 245 each coordinate Zn(2+). The short motif at 274–278 (KMSKS) is the 'KMSKS' region element. Lys277 contacts ATP.

This sequence belongs to the class-I aminoacyl-tRNA synthetase family. Monomer. Zn(2+) is required as a cofactor.

It is found in the cytoplasm. It catalyses the reaction tRNA(Cys) + L-cysteine + ATP = L-cysteinyl-tRNA(Cys) + AMP + diphosphate. This Rickettsia conorii (strain ATCC VR-613 / Malish 7) protein is Cysteine--tRNA ligase.